The following is a 258-amino-acid chain: 5'-nucleotidase SurE (258 aa).

A divalent metal cation contacts are provided by Asp-16, Asp-17, Ser-47, and Asn-99.

It belongs to the SurE nucleotidase family. Requires a divalent metal cation as cofactor.

The protein resides in the cytoplasm. It carries out the reaction a ribonucleoside 5'-phosphate + H2O = a ribonucleoside + phosphate. Nucleotidase that shows phosphatase activity on nucleoside 5'-monophosphates. The polypeptide is 5'-nucleotidase SurE (Coxiella burnetii (strain CbuK_Q154) (Coxiella burnetii (strain Q154))).